Reading from the N-terminus, the 123-residue chain is MSDIAEPETHAPADDQLLIFTDAAADKVRELLDGEEGGDVKLRVFITGGGCSGFQYGFTFDETVEEGDTIIEKRGVKIVVDPVSGIYLQGAEVDFSSGLEGEQFIIRNPNATTTCGCGSSFAI.

Residues C51, C115, and C117 each coordinate iron-sulfur cluster.

Belongs to the HesB/IscA family. In terms of assembly, homodimer. Iron-sulfur cluster is required as a cofactor.

Required for insertion of 4Fe-4S clusters for at least IspG. This Halorhodospira halophila (strain DSM 244 / SL1) (Ectothiorhodospira halophila (strain DSM 244 / SL1)) protein is Iron-sulfur cluster insertion protein ErpA.